We begin with the raw amino-acid sequence, 518 residues long: MTSSEIAMPGEVKADPAALMASLQLLPSPTPNLEIKYTKIFINNEWQNSESGRVFPVCNPATGEQVCEVQEADKVDIDKAVQAARLAFSLGSVWRRMDASERGRLLDKLADLVERDRATLATMESLNGGKPFLQAFYIDLQGVIKTLRYYAGWADKIHGMTIPVDGDYFTFTRHEPIGVCGQIIPWNFPLLMFTWKIAPALCCGNTVVIKPAEQTPLSALYMGALIKEAGFPPGVVNILPGYGPTAGAAIASHIGIDKIAFTGSTEVGKLIQEAAGRSNLKRVTLELGGKSPNIIFADADLDYAVEQAHQGVFFNQGQCCTAGSRIFVEESIYEEFVKRSVERAKRRIVGSPFDPTTEQGPQIDKKQYNKVLELIQSGVAEGAKLECGGKGLGRKGFFIEPTVFSNVTDDMRIAKEEIFGPVQEILRFKTMDEVIERANNSDFGLVAAVFTNDINKALMVSSAMQAGTVWINCYNALNAQSPFGGFKMSGNGREMGEFGLREYSEVKTVTVKIPQKNS.

Y168 bears the Phosphotyrosine mark. NAD(+) contacts are provided by residues 184–186 (IPW), 210–213 (KPAE), and 264–266 (STE). Catalysis depends on E286, which acts as the Proton acceptor. C320 acts as the Nucleophile in catalysis. A Phosphoserine modification is found at S351. Residues 366 to 370 (KQYNK) and E417 contribute to the NAD(+) site.

The protein belongs to the aldehyde dehydrogenase family. In terms of assembly, homotetramer.

The protein localises to the cytoplasm. The enzyme catalyses retinal + NAD(+) + H2O = retinoate + NADH + 2 H(+). The catalysed reaction is all-trans-retinal + NAD(+) + H2O = all-trans-retinoate + NADH + 2 H(+). It catalyses the reaction all-trans-13,14-dihydroretinal + NAD(+) + H2O = all-trans-13,14-dihydroretinoate + NADH + 2 H(+). Its pathway is cofactor metabolism; retinol metabolism. In terms of biological role, catalyzes the NAD-dependent oxidation of aldehyde substrates, such as all-trans-retinal and all-trans-13,14-dihydroretinal, to their corresponding carboxylic acids, all-trans-retinoate and all-trans-13,14-dihydroretinoate, respectively. Retinoate signaling is critical for the transcriptional control of many genes, for instance it is crucial for initiation of meiosis in both male and female. Recognizes retinal as substrate, both in its free form and when bound to cellular retinol-binding protein. Lacks activity with benzaldehyde, acetaldehyde and octanal. Displays complete lack of activity with citral. This chain is Retinal dehydrogenase 2 (Aldh1a2), found in Mus musculus (Mouse).